We begin with the raw amino-acid sequence, 1150 residues long: Cell division cycle and apoptosis regulator protein 1 (1150 aa).

The interval 1-249 (MAQFGGQKNP…TQPQPQSLLQ (249 aa)) is interaction with AR. Disordered stretches follow at residues 124-146 (PTAQ…QPQK) and 285-354 (IVSQ…SPRR). The segment covering 134-146 (TPRSSQQQTQPQK) has biased composition (low complexity). Residues 203–660 (QRIQTLPNQN…RALSSKGLKS (458 aa)) form an interaction with GATA2 region. 2 stretches are compositionally biased toward basic and acidic residues: residues 293 to 334 (RRLD…ERSP) and 341 to 352 (ERSPRRERERSP). Ser-456 carries the phosphoserine modification. Positions 594–618 (KQQLVEKLQGERKEADGEQDEEEKD) form a coiled coil. Positions 600–638 (KLQGERKEADGEQDEEEKDDGEAKEISTPTHWSKLDPKT) are disordered. A compositionally biased stretch (acidic residues) spans 610–621 (GEQDEEEKDDGE). Thr-627 carries the phosphothreonine modification. The SAP domain occupies 636–670 (PKTMKVNDLRKELESRALSSKGLKSQLIARLTKQL). Lys-637 is covalently cross-linked (Glycyl lysine isopeptide (Lys-Gly) (interchain with G-Cter in ubiquitin)). The segment at 643-1150 (DLRKELESRA…QKSKENGASV (508 aa)) is interaction with GATA1. Thr-667 carries the phosphothreonine modification. Composition is skewed to basic and acidic residues over residues 673-687 (EEQK…KSEK), 694-713 (DRKS…EEIE), 796-817 (KEDK…KKEE), and 832-855 (SGDD…KDDS). 2 disordered regions span residues 673–713 (EEQK…EEIE) and 796–915 (KEDK…EKEK). Phosphoserine occurs at positions 685 and 697. Positions 856–889 (KDDDETEEDNNQDEYDPMEAEEAEDEEDDRDEEE) are enriched in acidic residues. Thr-861 is subject to Phosphothreonine. Over residues 890–915 (MTKRDDKRDINRYCKERPSKDKEKEK) the composition is skewed to basic and acidic residues. Lys-1012 participates in a covalent cross-link: Glycyl lysine isopeptide (Lys-Gly) (interchain with G-Cter in SUMO1); alternate. A Glycyl lysine isopeptide (Lys-Gly) (interchain with G-Cter in SUMO2); alternate cross-link involves residue Lys-1012. A coiled-coil region spans residues 1033-1114 (DVGSLLQKLE…LQFENQMNKT (82 aa)). Residues Lys-1067 and Lys-1135 each participate in a glycyl lysine isopeptide (Lys-Gly) (interchain with G-Cter in SUMO2) cross-link.

Directly interacts with ESR1, NR3C1 and p53/TP53. Interacts (via N-terminus) with CALCOCO1. Interacts with MED1. Interacts with GATA1. Interacts with AR and GATA2. Expressed in various epithelial cancer cell lines, including breast, colon, prostate, pancreatic and leukemia. Expression is regulated by growth factors.

The protein resides in the cytoplasm. It is found in the perinuclear region. Functionally, associates with components of the Mediator and p160 coactivator complexes that play a role as intermediaries transducing regulatory signals from upstream transcriptional activator proteins to basal transcription machinery at the core promoter. Recruited to endogenous nuclear receptor target genes in response to the appropriate hormone. Also functions as a p53 coactivator. May thus play an important role in transcriptional regulation. May be involved in apoptosis signaling in the presence of the reinoid CD437. Apoptosis induction involves sequestration of 14-3-3 protein(s) and mediated altered expression of multiple cell cycle regulatory genes including MYC, CCNB1 and CDKN1A. Plays a role in cell cycle progression and/or cell proliferation. In association with CALCOCO1 enhances GATA1- and MED1-mediated transcriptional activation from the gamma-globin promoter during erythroid differentiation of K562 erythroleukemia cells. Can act as a both a coactivator and corepressor of AR-mediated transcription. Contributes to chromatin looping and AR transcription complex assembly by stabilizing AR-GATA2 association on chromatin and facilitating MED1 and RNA polymerase II recruitment to AR-binding sites. May play an important role in the growth and tumorigenesis of prostate cancer cells. The protein is Cell division cycle and apoptosis regulator protein 1 (CCAR1) of Homo sapiens (Human).